Consider the following 288-residue polypeptide: MAKDIEASGPEAGEFSAKDYTDPPPAPLIDAEELTQWSLYRAVIAEFIATLLFLYITVATVIGYKHQTDASASGPDAACGGVGILGIAWAFGGMIFILVYCTAGISGGHINPAVTFGLFLARKVSLVRALLYIIAQCLGAICGVGLVKGFQSAYYVRYGGGANELSDGYSKGTGLAAEIIGTFVLVYTVFSATDPKRSARDSHVPVLAPLPIGFAVFMVHLATIPITGTGINPARSLGAAVIYNKDKAWDDQWIFWVGPLIGAAIAAAYHQYVLRASATKLGSYRSNA.

Residues 1–24 (MAKDIEASGPEAGEFSAKDYTDPP) form a disordered region. A run of 2 helical transmembrane segments spans residues 42 to 62 (AVIAEFIATLLFLYITVATVI) and 79 to 99 (CGGVGILGIAWAFGGMIFILV). The NPA 1 signature appears at 111-113 (NPA). The next 3 membrane-spanning stretches (helical) occupy residues 130-150 (LLYIIAQCLGAICGVGLVKGF), 172-192 (GTGLAAEIIGTFVLVYTVFSA), and 206-226 (VLAPLPIGFAVFMVHLATIPI). The short motif at 232–234 (NPA) is the NPA 2 element. A helical membrane pass occupies residues 254–274 (IFWVGPLIGAAIAAAYHQYVL).

Belongs to the MIP/aquaporin (TC 1.A.8) family. PIP (TC 1.A.8.11) subfamily. In terms of assembly, homomers. May interact with PIP1-2 to form heteromers. As to expression, expressed in the root growing zone at 5-6 mm from the root tip.

It localises to the cell membrane. Water channel required to facilitate the transport of water across cell membrane. Active as homomers. Increased activity when heteromerization with PIP1-2. This chain is Aquaporin PIP2-4 (PIP2-4), found in Zea mays (Maize).